The following is a 339-amino-acid chain: D-erythrose-4-phosphate dehydrogenase (339 aa).

NAD(+) is bound at residue 12 to 13 (RI). Substrate contacts are provided by residues 154 to 156 (SCT), arginine 200, 213 to 214 (TK), and arginine 236. Residue cysteine 155 is the Nucleophile of the active site. Asparagine 318 is a binding site for NAD(+).

The protein belongs to the glyceraldehyde-3-phosphate dehydrogenase family. Epd subfamily. Homotetramer.

It is found in the cytoplasm. It catalyses the reaction D-erythrose 4-phosphate + NAD(+) + H2O = 4-phospho-D-erythronate + NADH + 2 H(+). It functions in the pathway cofactor biosynthesis; pyridoxine 5'-phosphate biosynthesis; pyridoxine 5'-phosphate from D-erythrose 4-phosphate: step 1/5. Catalyzes the NAD-dependent conversion of D-erythrose 4-phosphate to 4-phosphoerythronate. This Enterobacter sp. (strain 638) protein is D-erythrose-4-phosphate dehydrogenase.